Consider the following 363-residue polypeptide: Cytochrome b (363 aa).

4 helical membrane-spanning segments follow: residues 24-44 (VGFS…CLAW), 68-90 (FVIR…IHIF), 105-125 (VWFI…IGYV), and 171-191 (LHVL…LHLF). Heme b contacts are provided by histidine 74 and histidine 88. 2 residues coordinate heme b: histidine 175 and histidine 189. Residue histidine 194 participates in a ubiquinone binding. 4 helical membrane passes run 219–239 (FYLR…YVIF), 287–307 (FLMV…ILWF), 321–341 (LILF…VLAY), and 342–362 (PIWM…VCRL).

This sequence belongs to the cytochrome b family. The main subunits of complex b-c1 are: cytochrome b, cytochrome c1 and the Rieske protein. Heme b serves as cofactor.

It is found in the mitochondrion inner membrane. Component of the ubiquinol-cytochrome c reductase complex (complex III or cytochrome b-c1 complex) that is part of the mitochondrial respiratory chain. The b-c1 complex mediates electron transfer from ubiquinol to cytochrome c. Contributes to the generation of a proton gradient across the mitochondrial membrane that is then used for ATP synthesis. This is Cytochrome b (MT-CYB) from Trypanosoma brucei brucei.